A 425-amino-acid chain; its full sequence is Isocitrate dehydrogenase [NADP] (425 aa).

T114 serves as a coordination point for NADP(+). D-threo-isocitrate-binding residues include S123, N125, R129, R139, and R162. D316 lines the Mg(2+) pocket. Residues 348-354 (HGTAPKY), N361, Y400, and R404 each bind NADP(+).

This sequence belongs to the isocitrate and isopropylmalate dehydrogenases family. In terms of assembly, homodimer. It depends on Mg(2+) as a cofactor. Requires Mn(2+) as cofactor.

The enzyme catalyses D-threo-isocitrate + NADP(+) = 2-oxoglutarate + CO2 + NADPH. Its function is as follows. Catalyzes the oxidative decarboxylation of isocitrate to 2-oxoglutarate and carbon dioxide with the concomitant reduction of NADP(+). The protein is Isocitrate dehydrogenase [NADP] (icd) of Helicobacter pylori (strain ATCC 700392 / 26695) (Campylobacter pylori).